A 284-amino-acid chain; its full sequence is NAD kinase (284 aa).

Asp60 serves as the catalytic Proton acceptor. NAD(+) contacts are provided by residues 60–61 (DG), 134–135 (ND), Arg145, Lys162, Asp164, 175–180 (TAYSFS), and Gln234.

Belongs to the NAD kinase family. A divalent metal cation serves as cofactor.

It is found in the cytoplasm. It catalyses the reaction NAD(+) + ATP = ADP + NADP(+) + H(+). Its function is as follows. Involved in the regulation of the intracellular balance of NAD and NADP, and is a key enzyme in the biosynthesis of NADP. Catalyzes specifically the phosphorylation on 2'-hydroxyl of the adenosine moiety of NAD to yield NADP. The chain is NAD kinase from Clostridium beijerinckii (strain ATCC 51743 / NCIMB 8052) (Clostridium acetobutylicum).